A 392-amino-acid polypeptide reads, in one-letter code: Anhydro-N-acetylmuramic acid kinase (392 aa).

ATP is bound at residue 22–29 (GTSMDGVD).

Belongs to the anhydro-N-acetylmuramic acid kinase family.

The catalysed reaction is 1,6-anhydro-N-acetyl-beta-muramate + ATP + H2O = N-acetyl-D-muramate 6-phosphate + ADP + H(+). It participates in amino-sugar metabolism; 1,6-anhydro-N-acetylmuramate degradation. It functions in the pathway cell wall biogenesis; peptidoglycan recycling. Catalyzes the specific phosphorylation of 1,6-anhydro-N-acetylmuramic acid (anhMurNAc) with the simultaneous cleavage of the 1,6-anhydro ring, generating MurNAc-6-P. Is required for the utilization of anhMurNAc either imported from the medium or derived from its own cell wall murein, and thus plays a role in cell wall recycling. This chain is Anhydro-N-acetylmuramic acid kinase, found in Burkholderia pseudomallei (strain 1106a).